The following is a 942-amino-acid chain: Alpha,alpha-trehalose-phosphate synthase [UDP-forming] 1 (942 aa).

The segment at 28–57 is disordered; it reads REKRKSNRARNPNDVAGSSENSENDLRLEG. The tract at residues 92-559 is glycosyltransferase; it reads QRLLVVANRL…AETFVSELND (468 aa). The disordered stretch occupies residues 815–892; that stretch reads DMPAIARSRP…LGNSRRPSPE (78 aa). Low complexity-rich tracts occupy residues 821–833 and 841–867; these read RSRP…AKSS and SKST…NKSS. Residues 879-888 show a composition bias toward polar residues; the sequence is SNHSLGNSRR.

It in the N-terminal section; belongs to the glycosyltransferase 20 family. The protein in the C-terminal section; belongs to the trehalose phosphatase family. As to expression, expressed in seedlings, leaves, roots, stems, flowers and siliques.

It is found in the vacuole. It localises to the secreted. The protein resides in the cell wall. Its subcellular location is the cytoplasm. It carries out the reaction D-glucose 6-phosphate + UDP-alpha-D-glucose = alpha,alpha-trehalose 6-phosphate + UDP + H(+). In terms of biological role, required for normal embryo development, vegetative growth and transition to flowering. Regulates embryo growth, cell wall deposition, starch and sucrose degradation, but not cell differentiation. Involved in the regulation of glucose sensing and signaling genes during plant development. This Arabidopsis thaliana (Mouse-ear cress) protein is Alpha,alpha-trehalose-phosphate synthase [UDP-forming] 1.